A 73-amino-acid chain; its full sequence is DNA-binding protein S1FA3 (73 aa).

The Nuclear localization signal motif lies at 47-52 (PPRKKK). The span at 47–63 (PPRKKKPVSKKKMKKEK) shows a compositional bias: basic residues. The disordered stretch occupies residues 47-73 (PPRKKKPVSKKKMKKEKMKQGVQVPGE).

Belongs to the S1FA transcription factor family.

Its subcellular location is the nucleus. Functionally, DNA-binding protein that specifically recognizes a negative element (S1F) within the RPS1 promoter. This is DNA-binding protein S1FA3 (S1FA3) from Arabidopsis thaliana (Mouse-ear cress).